Here is a 180-residue protein sequence, read N- to C-terminus: Adenine phosphoribosyltransferase (180 aa).

N-acetylalanine is present on alanine 2. Serine 4, serine 15, and serine 30 each carry phosphoserine. Tyrosine 60 is modified (phosphotyrosine). At serine 66 the chain carries Phosphoserine. Lysine 114 carries the N6-acetyllysine modification. A Phosphothreonine modification is found at threonine 135.

This sequence belongs to the purine/pyrimidine phosphoribosyltransferase family. In terms of assembly, homodimer.

The protein resides in the cytoplasm. The catalysed reaction is AMP + diphosphate = 5-phospho-alpha-D-ribose 1-diphosphate + adenine. The protein operates within purine metabolism; AMP biosynthesis via salvage pathway; AMP from adenine: step 1/1. In terms of biological role, catalyzes a salvage reaction resulting in the formation of AMP, that is energically less costly than de novo synthesis. This is Adenine phosphoribosyltransferase from Cricetulus griseus (Chinese hamster).